The following is a 207-amino-acid chain: Macrophage immunometabolism regulator (207 aa).

Methionine 1 bears the N-acetylmethionine mark. The disordered stretch occupies residues 1 to 41 (MEVDVNGESRSALTTLPLPVAEASSPGKAEAEKPRCSSTPC). 3 positions are modified to phosphoserine: serine 25, serine 140, and serine 167.

Belongs to the UNC119-binding protein family. Interacts with UNC119 and UNC119B; interaction preferentially takes place when UNC119 and UNC119B are unliganded with myristoylated proteins.

It is found in the cytoplasm. It localises to the cell projection. The protein localises to the cilium. Regulates the macrophage function, by enhancing the resolution of inflammation and wound repair functions mediated by M2 macrophages. The regulation of macrophage function is, due at least in part, to its ability to inhibit glycolysis. May play also a role in trafficking of proteins via its interaction with UNC119 and UNC119B cargo adapters: may help the release of UNC119 and UNC119B cargo or the recycling of UNC119 and UNC119B. May play a role in ciliary membrane localization via its interaction with UNC119B and protein transport into photoreceptor cells. The protein is Macrophage immunometabolism regulator (MACIR) of Bos taurus (Bovine).